Here is a 959-residue protein sequence, read N- to C-terminus: Vacuolar membrane protease (959 aa).

The Cytoplasmic portion of the chain corresponds to 1–13 (MARLNPLSFTPGP). The chain crosses the membrane as a helical span at residues 14–34 (VIFFTCAVYIALFAALLTVHL). Topologically, residues 35-378 (RVPDYPSKTP…KVFVVFQLHT (344 aa)) are vacuolar. Asn48, Asn102, and Asn105 each carry an N-linked (GlcNAc...) asparagine glycan. The tract at residues 128–149 (GSEDDEPYHSPQSSPPGERRLD) is disordered. Positions 158 and 170 each coordinate Zn(2+). Glu204 functions as the Proton acceptor in the catalytic mechanism. Zn(2+) is bound by residues Glu205, Glu230, and His303. The chain crosses the membrane as a helical span at residues 379-399 (MFALCVTLLVVAPLFLIGLTF). Residues 400 to 432 (GLSKADKNYLFARKAYMYSSDDDHPVHLYGWRG) are Cytoplasmic-facing. The helical transmembrane segment at 433 to 453 (FFRFPIVFSIATAVVVGLAYL) threads the bilayer. The Vacuolar portion of the chain corresponds to 454–463 (MVRLNPLILY). Residues 464 to 484 (SSPYAVWSMMLSAWFSVAWFF) traverse the membrane as a helical segment. The Cytoplasmic segment spans residues 485 to 498 (SRGASAMRPSALQR). A helical transmembrane segment spans residues 499-519 (MYALIWLFAGSFALLAFVTVL). The Vacuolar portion of the chain corresponds to 520-524 (SNNYQ). The helical transmembrane segment at 525–545 (VAGGYFALFYFAGIFLALVLS) threads the bilayer. The Cytoplasmic segment spans residues 546–645 (YLELFFAPTK…YPGEQDWSGK (100 aa)). Disordered stretches follow at residues 566-594 (DEPVSRPLTGTTTAARSEEPPIADDDATE) and 606-635 (FARHSGRRDSIDDENGNRDEEPVQLDLKQP). Basic and acidic residues predominate over residues 612–626 (RRDSIDDENGNRDEE). Residues 646–666 (LPGWLWLLQLLLVAPIVVILV) form a helical membrane-spanning segment. Residues 667–688 (GQIALLLTSALHQTPADGNSSL) lie on the Vacuolar side of the membrane. N-linked (GlcNAc...) asparagine glycosylation is present at Asn685. A helical membrane pass occupies residues 689-709 (FVYLAFALLTTLLLAPIGPFI). At 710 to 716 (HRFTWHV) the chain is on the cytoplasmic side. A helical transmembrane segment spans residues 717-737 (PTFVFLVCVATVIYNLVAFPF). Residues 738 to 959 (SREHRLKVYF…LVEGFKYFQV (222 aa)) lie on the Vacuolar side of the membrane. N-linked (GlcNAc...) asparagine glycans are attached at residues Asn785, Asn818, Asn834, Asn864, and Asn899.

This sequence belongs to the peptidase M28 family. It depends on Zn(2+) as a cofactor.

Its subcellular location is the vacuole membrane. In terms of biological role, may be involved in vacuolar sorting and osmoregulation. The sequence is that of Vacuolar membrane protease from Phaeosphaeria nodorum (strain SN15 / ATCC MYA-4574 / FGSC 10173) (Glume blotch fungus).